A 330-amino-acid chain; its full sequence is Fructose-1,6-bisphosphatase class 1 (330 aa).

Glutamate 84, aspartate 103, leucine 105, and aspartate 106 together coordinate Mg(2+). Substrate-binding positions include 106–109 (DGSS), asparagine 196, and lysine 262. Residue glutamate 268 participates in Mg(2+) binding.

It belongs to the FBPase class 1 family. Homotetramer. Mg(2+) is required as a cofactor.

It is found in the cytoplasm. The catalysed reaction is beta-D-fructose 1,6-bisphosphate + H2O = beta-D-fructose 6-phosphate + phosphate. It participates in carbohydrate biosynthesis; gluconeogenesis. In Shewanella sp. (strain MR-7), this protein is Fructose-1,6-bisphosphatase class 1.